Consider the following 326-residue polypeptide: tRNA uridine(34) hydroxylase (326 aa).

The Rhodanese domain occupies 123–217; it reads SDPDVLLVDT…YLEEVPEENS (95 aa). Catalysis depends on cysteine 177, which acts as the Cysteine persulfide intermediate. Over residues 276–320 the composition is skewed to basic and acidic residues; sequence EEQKSRFREREKQVQLANERGETHVGGDAAKLIEQRKQEKKEKKQ. Residues 276–326 are disordered; the sequence is EEQKSRFREREKQVQLANERGETHVGGDAAKLIEQRKQEKKEKKQQQRSSK.

Belongs to the TrhO family.

The enzyme catalyses uridine(34) in tRNA + AH2 + O2 = 5-hydroxyuridine(34) in tRNA + A + H2O. In terms of biological role, catalyzes oxygen-dependent 5-hydroxyuridine (ho5U) modification at position 34 in tRNAs. This chain is tRNA uridine(34) hydroxylase, found in Aliivibrio salmonicida (strain LFI1238) (Vibrio salmonicida (strain LFI1238)).